The following is a 380-amino-acid chain: Cytochrome b (380 aa).

Helical transmembrane passes span 34–54 (FGSL…LLAT), 78–99 (WLIR…YLHI), 114–134 (WNTG…GYVL), and 179–199 (FFAL…IHLT). Heme b-binding residues include histidine 84 and histidine 98. Heme b contacts are provided by histidine 183 and histidine 197. An a ubiquinone-binding site is contributed by histidine 202. 4 helical membrane-spanning segments follow: residues 227 to 247 (LKDI…ALFS), 289 to 309 (LGGV…PLLH), 321 to 341 (LSQL…WVGS), and 348 to 368 (FIII…ILFP).

The protein belongs to the cytochrome b family. In terms of assembly, the cytochrome bc1 complex contains 11 subunits: 3 respiratory subunits (MT-CYB, CYC1 and UQCRFS1), 2 core proteins (UQCRC1 and UQCRC2) and 6 low-molecular weight proteins (UQCRH/QCR6, UQCRB/QCR7, UQCRQ/QCR8, UQCR10/QCR9, UQCR11/QCR10 and a cleavage product of UQCRFS1). This cytochrome bc1 complex then forms a dimer. Heme b is required as a cofactor.

Its subcellular location is the mitochondrion inner membrane. Component of the ubiquinol-cytochrome c reductase complex (complex III or cytochrome b-c1 complex) that is part of the mitochondrial respiratory chain. The b-c1 complex mediates electron transfer from ubiquinol to cytochrome c. Contributes to the generation of a proton gradient across the mitochondrial membrane that is then used for ATP synthesis. The sequence is that of Cytochrome b (MT-CYB) from Ciconia ciconia (White stork).